A 749-amino-acid chain; its full sequence is uncharacterized protein (749 aa).

4 disordered regions span residues 1–58 (MGTV…QPSN), 124–170 (DANA…PSPL), 200–291 (SRFS…PPVS), and 385–405 (YTWS…NPST). The segment covering 13–24 (LNNGLSSNNGSS) has biased composition (low complexity). Polar residues-rich tracts occupy residues 149 to 159 (KSASKDSNAFN), 238 to 252 (ESKT…PSLN), 265 to 275 (LNYQNSSLNPS), and 388 to 405 (SRHS…NPST). Residues 644–729 (KRILRKAQPH…YKTRIWMCAV (86 aa)) form the PSP1 C-terminal domain.

This is an uncharacterized protein from Schizosaccharomyces pombe (strain 972 / ATCC 24843) (Fission yeast).